Consider the following 121-residue polypeptide: LOB domain-containing protein 23 (121 aa).

Residues 4 to 105 enclose the LOB domain; that stretch reads KRCAACKYLR…NELAKTQAEI (102 aa).

The protein belongs to the LOB domain-containing protein family.

The protein is LOB domain-containing protein 23 (LBD23) of Arabidopsis thaliana (Mouse-ear cress).